Reading from the N-terminus, the 330-residue chain is GTPase Obg (330 aa).

The Obg domain occupies 1 to 159 (MHFIDEVKIY…MWIHLSLKLL (159 aa)). In terms of domain architecture, OBG-type G spans 160–327 (SDVGLVGFPN…IVKLALETIK (168 aa)). GTP-binding positions include 166-173 (GFPNAGKS), 191-195 (FTTLV), 212-215 (DIPG), 279-282 (NKCD), and 308-310 (STY). Residues Ser-173 and Thr-193 each contribute to the Mg(2+) site.

This sequence belongs to the TRAFAC class OBG-HflX-like GTPase superfamily. OBG GTPase family. Monomer. Mg(2+) serves as cofactor.

The protein localises to the cytoplasm. Functionally, an essential GTPase which binds GTP, GDP and possibly (p)ppGpp with moderate affinity, with high nucleotide exchange rates and a fairly low GTP hydrolysis rate. Plays a role in control of the cell cycle, stress response, ribosome biogenesis and in those bacteria that undergo differentiation, in morphogenesis control. In Rickettsia massiliae (strain Mtu5), this protein is GTPase Obg.